Reading from the N-terminus, the 735-residue chain is MADEAEQAGLRILGDVLSAAHSAGDLSCLSPDLLARIADTFHLQRVSLFQVHEAEGRGIAATCVIDWRRPGLAFPAMTEGSHPPLTAAGGDPLLAQWAARRRRGETIIGRTRDLTGYLYGFFSHYGVVTFLTEPVMVHGRWWGHFCVDTPDAEHEWTAVERQAFKCIAAVLAGLLARSGTEGLVSEAARRAMLDTSIDAVIVADEAGAIVEFNHAAEAIFGHTREGVIGRPMTETIIPAHYIDRHRQGFMRHLATGENHIMRRLVEVEALRADGSVFPAELTVNEHRAGGRRLFSAFVRDISDRITSRRALERLAFTDMHTGLSNRTGLLRLCTGRPTRPSGAVVLMLRDLGVVKTSFGDDWAEPMIVETANLLSRMLPQEACLGRTGESEFTVVTWQPGAAAELAETLIGRLRSAIESGGRRFYLRVGLGVVERPGDATYLLRDAEMAARDCRDGHLLHFAEHMRAQHQQRLELEMALRDVIQRRTSALSLHYQPVVSARTGGLVGFEALVRWYSETHGPVSPALFVPLAEAGGFAERLGAWVIETAISACAGWNVRRRAHGLAPWHIAINLSATEVVAPDLIERVRQTMAFHGLPPQCVCFELTESAILNQPEIAIETLSRLRALGCTTAIDDFGTGYSSLSYLQRLPMDVLKIDRSFVLDMVDNSRSREIVRVMIEMAHGLGMSVVAEGVETTGALQILRQMGCDRAQGFLFGRAMPGDVAGTLPETLAPTG.

Residues 25 to 175 (DLSCLSPDLL…CIAAVLAGLL (151 aa)) enclose the GAF domain. In terms of domain architecture, PAS spans 185–255 (SEAARRAMLD…RQGFMRHLAT (71 aa)). The PAC domain occupies 263–313 (RLVEVEALRADGSVFPAELTVNEHRAGGRRLFSAFVRDISDRITSRRALER). The GGDEF domain occupies 342–464 (GAVVLMLRDL…DGHLLHFAEH (123 aa)). Residues 472–732 (RLELEMALRD…VAGTLPETLA (261 aa)) enclose the EAL domain.

This is an uncharacterized protein from Azorhizobium caulinodans (strain ATCC 43989 / DSM 5975 / JCM 20966 / LMG 6465 / NBRC 14845 / NCIMB 13405 / ORS 571).